Reading from the N-terminus, the 408-residue chain is MAFLSLHTSPMEQPGAGDAGGMNVYVRALAMALAESGVEVEIFTRSTKAGQPAVEHPGPGVCVHNVMAGPRRKLPKEELPELLHHMVEEIDRIRLQQLHGRYDAIHSHYWVSGVAGLELSELWGVPLVHTMHTMAKVKNLVLESGERPEPRRREEGEQRIVDGAARLVANTPAEADELVSHYGADLDRIDVAPPGVDLKVFTPSFRRKSRSLRGVRPDSFHILFAGRIQRLKGPQVFVKAAGILRKRRPDIDLEMTILGSLSGAKDFNLQHFIEDAGLADVVTHRPPVVAPELASWFRSADVVVMPSFSESFGLVALEAQACGTPVVATNVGGLSRAISDGRTGILVDGHHPSDWADALEDLYDDVQTREDMGRLAATHAESFGWQRTAAITLESYREAVSGLLVPRR.

H7 is a binding site for 1D-myo-inositol 3-phosphate. UDP-N-acetyl-alpha-D-glucosamine is bound by residues Q13–P14 and G21. 1D-myo-inositol 3-phosphate is bound by residues D18–N23, K76, Y109, T133, and R153. Positions 227, 232, and 288 each coordinate UDP-N-acetyl-alpha-D-glucosamine. F297, R298, and A300 together coordinate Mg(2+). UDP-N-acetyl-alpha-D-glucosamine contacts are provided by E310 and E318. T324 is a Mg(2+) binding site.

It belongs to the glycosyltransferase group 1 family. MshA subfamily. Homodimer.

The enzyme catalyses 1D-myo-inositol 3-phosphate + UDP-N-acetyl-alpha-D-glucosamine = 1D-myo-inositol 2-acetamido-2-deoxy-alpha-D-glucopyranoside 3-phosphate + UDP + H(+). Catalyzes the transfer of a N-acetyl-glucosamine moiety to 1D-myo-inositol 3-phosphate to produce 1D-myo-inositol 2-acetamido-2-deoxy-glucopyranoside 3-phosphate in the mycothiol biosynthesis pathway. This is D-inositol 3-phosphate glycosyltransferase from Paenarthrobacter aurescens (strain TC1).